The chain runs to 612 residues: Sulfite reductase [NADPH] hemoprotein beta-component (612 aa).

The disordered stretch occupies residues 1 to 32 (MDDHKPIDTPDGPAVDTPGIGAHRYEAPPTDR). [4Fe-4S] cluster is bound by residues C469, C475, C514, and C518. Residue C518 participates in siroheme binding.

This sequence belongs to the nitrite and sulfite reductase 4Fe-4S domain family. As to quaternary structure, alpha(8)-beta(8). The alpha component is a flavoprotein, the beta component is a hemoprotein. Requires siroheme as cofactor. [4Fe-4S] cluster serves as cofactor.

The catalysed reaction is hydrogen sulfide + 3 NADP(+) + 3 H2O = sulfite + 3 NADPH + 4 H(+). The protein operates within sulfur metabolism; hydrogen sulfide biosynthesis; hydrogen sulfide from sulfite (NADPH route): step 1/1. Component of the sulfite reductase complex that catalyzes the 6-electron reduction of sulfite to sulfide. This is one of several activities required for the biosynthesis of L-cysteine from sulfate. In Methylorubrum populi (strain ATCC BAA-705 / NCIMB 13946 / BJ001) (Methylobacterium populi), this protein is Sulfite reductase [NADPH] hemoprotein beta-component.